We begin with the raw amino-acid sequence, 261 residues long: tRNA pseudouridine synthase A (261 aa).

Asp-51 serves as the catalytic Nucleophile. A substrate-binding site is contributed by Tyr-109.

Belongs to the tRNA pseudouridine synthase TruA family. As to quaternary structure, homodimer.

It catalyses the reaction uridine(38/39/40) in tRNA = pseudouridine(38/39/40) in tRNA. In terms of biological role, formation of pseudouridine at positions 38, 39 and 40 in the anticodon stem and loop of transfer RNAs. The sequence is that of tRNA pseudouridine synthase A from Shewanella amazonensis (strain ATCC BAA-1098 / SB2B).